The chain runs to 325 residues: Biotin synthase (325 aa).

A Radical SAM core domain is found at 49-278 (FNGNIVDLCS…KASIRLAGGR (230 aa)). [4Fe-4S] cluster is bound by residues C67, C71, and C74. [2Fe-2S] cluster contacts are provided by S111, C143, C203, and R273.

The protein belongs to the radical SAM superfamily. Biotin synthase family. In terms of assembly, homodimer. [4Fe-4S] cluster is required as a cofactor. It depends on [2Fe-2S] cluster as a cofactor.

It catalyses the reaction (4R,5S)-dethiobiotin + (sulfur carrier)-SH + 2 reduced [2Fe-2S]-[ferredoxin] + 2 S-adenosyl-L-methionine = (sulfur carrier)-H + biotin + 2 5'-deoxyadenosine + 2 L-methionine + 2 oxidized [2Fe-2S]-[ferredoxin]. Its pathway is cofactor biosynthesis; biotin biosynthesis; biotin from 7,8-diaminononanoate: step 2/2. In terms of biological role, catalyzes the conversion of dethiobiotin (DTB) to biotin by the insertion of a sulfur atom into dethiobiotin via a radical-based mechanism. This Clostridium tetani (strain Massachusetts / E88) protein is Biotin synthase.